Here is a 109-residue protein sequence, read N- to C-terminus: Guanylin (109 aa).

The N-terminal stretch at 1 to 21 (MNTFLFPTLCLLGVWAALAGG) is a signal peptide. The propeptide occupies 22-94 (VTVKDGEFSF…LERLETIAQD (73 aa)). Cystine bridges form between Cys63–Cys76, Cys98–Cys106, and Cys101–Cys109.

The protein belongs to the guanylin family.

The protein resides in the secreted. Functionally, endogenous activator of intestinal guanylate cyclase. It stimulates this enzyme through the same receptor binding region as the heat-stable enterotoxins. The polypeptide is Guanylin (GUCA2A) (Sus scrofa (Pig)).